Here is a 638-residue protein sequence, read N- to C-terminus: MKVLAPGYLAEASLTALASGCQALSTRPYVPRGYSLSRRNDSTPIYKDASYCIDERVDDLLARMTIEEKAGQLFHTRLMDGPLDDEGSGNNAHNSTSNMIGEKHMTHFNLASDITNATETAEFINRIQELALQTRLGIPVTVSTDPRHSFTENVGTGFKAGVFSQWPESIGLAALRDPYVVRKFAEVAKEEYIAVGIRAALHPQVDLSTEPRWARISNTWGENSTLTSELLVEYIKGFQGDKLGPQSVKTVTKHFPGGGPVENGEDSHFAYGKNQTYPGNNLEEHLKPFKAAIAAGATEIMPYYSRPIGTEYEPVAFSFNKRIVTELLRNELGFDGIVLTDWGLITDGYIAGQYMPARAWGVENLTELQRAARILDAGCDQFGGEERPELIVQLVQEGIISEDRIDVSVRRLLKEKFVLGLFDNPFVDAEAAGRVVGNDYFVRLGREAQRRSYTLLSNNEDIVPLKKIEKSTKFYIEGFNASFIESWNYTVVDSPEEAEYALLRYNAPYEPRPGGFEANMHAGSLAFNDTEKARQAKIYSAVPTIVDIVMDRPAVIPEIIEQAKAVFASYGSDSNAFLDVVFGVSAPEGKLPFDLPSSMEAVEAQMEDVPFDTRNPVFKFGHGLSYANPCASSSSKCS.

The first 18 residues, methionine 1–alanine 18, serve as a signal peptide directing secretion. Residues asparagine 40, asparagine 94, asparagine 116, asparagine 223, and asparagine 274 are each glycosylated (N-linked (GlcNAc...) asparagine). Residue aspartate 341 is part of the active site. Residues asparagine 364, asparagine 480, asparagine 488, and asparagine 528 are each glycosylated (N-linked (GlcNAc...) asparagine).

It belongs to the glycosyl hydrolase 3 family.

It is found in the secreted. The catalysed reaction is Hydrolysis of terminal, non-reducing beta-D-glucosyl residues with release of beta-D-glucose.. The protein operates within glycan metabolism; cellulose degradation. Functionally, beta-glucosidases are one of a number of cellulolytic enzymes involved in the degradation of cellulosic biomass. Catalyzes the last step releasing glucose from the inhibitory cellobiose. This chain is Probable beta-glucosidase C (bglC), found in Aspergillus oryzae (strain ATCC 42149 / RIB 40) (Yellow koji mold).